The chain runs to 476 residues: Glycogen synthase (476 aa).

ADP-alpha-D-glucose is bound at residue Lys15.

This sequence belongs to the glycosyltransferase 1 family. Bacterial/plant glycogen synthase subfamily.

It catalyses the reaction [(1-&gt;4)-alpha-D-glucosyl](n) + ADP-alpha-D-glucose = [(1-&gt;4)-alpha-D-glucosyl](n+1) + ADP + H(+). The protein operates within glycan biosynthesis; glycogen biosynthesis. Synthesizes alpha-1,4-glucan chains using ADP-glucose. The polypeptide is Glycogen synthase (Streptococcus gordonii (strain Challis / ATCC 35105 / BCRC 15272 / CH1 / DL1 / V288)).